The primary structure comprises 83 residues: U5-theraphotoxin-Hs1a 1 (83 aa).

Positions 1-21 are cleaved as a signal peptide; that stretch reads MKTSMFLTLTGLGLLFVVCYA. The propeptide occupies 22-49; it reads SESEEKEFPKELLSSIFAADSDFKVEER. 3 cysteine pairs are disulfide-bonded: Cys-51/Cys-63, Cys-56/Cys-68, and Cys-62/Cys-75.

It belongs to the neurotoxin 10 (Hwtx-1) family. 51 (Hntx-8) subfamily. Hntx-8 sub-subfamily. Expressed by the venom gland.

It localises to the secreted. Agglutinates human and mice erythrocytes. This activity can be specifically inhibited by mannosamine. This lectin shows very low toxicity in both mammals and insects. The chain is U5-theraphotoxin-Hs1a 1 from Cyriopagopus schmidti (Chinese bird spider).